Here is a 618-residue protein sequence, read N- to C-terminus: Auxin efflux carrier component 3a (618 aa).

At 1 to 6 the chain is on the extracellular side; that stretch reads MISGHD. Residues 7–27 form a helical membrane-spanning segment; the sequence is FYTVMAAVVPLYVAMFLAYGS. Over 28 to 38 the chain is Cytoplasmic; it reads VRWWGIFTPDQ. A helical transmembrane segment spans residues 39-59; that stretch reads CSGINRFVAIFAVPLLSFHFI. Val51 serves as a coordination point for (indol-3-yl)acetate. The Extracellular segment spans residues 60-70; that stretch reads STNDPYAMNLR. A helical transmembrane segment spans residues 71–90; it reads FLAADTLQKLLVLAGLAAWS. Over 91–104 the chain is Cytoplasmic; the sequence is RLPSRTGAPRLDWS. Residues 105–125 form a helical membrane-spanning segment; that stretch reads ITLFSLSTLPNTLVMGIPLLI. (indol-3-yl)acetate-binding residues include Asn115 and Leu117. Over 126–134 the chain is Extracellular; that stretch reads AMYGPYSGS. The helical transmembrane segment at 135-155 threads the bilayer; that stretch reads LMVQIVVLQCIIWYTLMLFLF. Tyr148 contacts (indol-3-yl)acetate. The Cytoplasmic portion of the chain corresponds to 156-478; it reads EFRAARMLIA…LIRNPNTYSS (323 aa). A compositionally biased stretch (polar residues) spans 281–293; it reads SLQSSRGPTPRQS. The interval 281–312 is disordered; that stretch reads SLQSSRGPTPRQSNFDEHSARPPKPPATTTGA. A helical transmembrane segment spans residues 479–499; the sequence is LLGLAWSLVAFRWHVSMPAIV. Residues 500–502 lie on the Extracellular side of the membrane; the sequence is EKS. Residues 503–523 traverse the membrane as a helical segment; that stretch reads ISILSDAGLGMAMFSLGLFMA. At 524 to 539 the chain is on the cytoplasmic side; that stretch reads LQPSIIACGKSAAVVS. A helical membrane pass occupies residues 540 to 560; that stretch reads MAVRFLAGPAVMAAASIAIGL. The Extracellular portion of the chain corresponds to 561–563; sequence RGT. The helical transmembrane segment at 564–584 threads the bilayer; the sequence is LLHVAIVQAALPQGIVPFVFA. Positions 578 and 579 each coordinate (indol-3-yl)acetate. Topologically, residues 585–597 are cytoplasmic; the sequence is KEYNVHPAILSTA. Residues 598–618 traverse the membrane as a helical segment; sequence VIFGMLIALPITLLYYILLGL.

This sequence belongs to the auxin efflux carrier (TC 2.A.69.1) family. In terms of assembly, homodimer. In terms of tissue distribution, expressed in coleoptiles, roots, vascular bundles of leaves, shoots, lamina joints and vascular bundles of the lemma and filament. Expressed in stem bases, stems, leaves and young panicles.

It localises to the cell membrane. In terms of biological role, acts as a component of the auxin efflux carrier. Involved in the polar auxin transport which may regulate crown root development and response to water stress. In Oryza sativa subsp. japonica (Rice), this protein is Auxin efflux carrier component 3a.